The chain runs to 75 residues: Putative sulfur carrier protein YrkI (75 aa).

Cysteine 14 serves as the catalytic Cysteine persulfide intermediate.

The protein belongs to the sulfur carrier protein TusA family.

The sequence is that of Putative sulfur carrier protein YrkI (yrkI) from Bacillus subtilis (strain 168).